A 360-amino-acid chain; its full sequence is Molybdenum import ATP-binding protein ModC (360 aa).

Residues 5 to 234 (VKLHLGYQDF…LDLPLALGDD (230 aa)) enclose the ABC transporter domain. 32–39 (GHSGSGKT) contacts ATP. Residues 295–360 (HSSILNRLPV…AQIKAVAVLA (66 aa)) enclose the Mop domain.

This sequence belongs to the ABC transporter superfamily. Molybdate importer (TC 3.A.1.8) family. In terms of assembly, the complex is composed of two ATP-binding proteins (ModC), two transmembrane proteins (ModB) and a solute-binding protein (ModA).

The protein resides in the cell inner membrane. The catalysed reaction is molybdate(out) + ATP + H2O = molybdate(in) + ADP + phosphate + H(+). In terms of biological role, part of the ABC transporter complex ModABC involved in molybdenum import. Responsible for energy coupling to the transport system. The sequence is that of Molybdenum import ATP-binding protein ModC from Pseudomonas fluorescens (strain ATCC BAA-477 / NRRL B-23932 / Pf-5).